A 400-amino-acid polypeptide reads, in one-letter code: MTKTTYPGTAYRPILSEQEADRFTLPHYFTRRGHDGHSDTDVWQPTSIEVDPATPWVVGPQVGVDGATHGTVQQAVNAALRAQQDRPCIDIKLLPGIYTGAVYIPADAPPLTLFGTGEQPNDVVIQLALDSMFSPATYRETVNSHGEYQPGDPAWYMYDLCASKQNATIDTICAAVVWSQSDNLQMKNLTVVNALLDSVDGRAHQAVALRTDGDKIQLERVRLIGRQDTFFVNTSNLRNEYVTDRYSRAYIKDSYIEGDVDYVFGRATAVFDRVHFHTVSSRGAKDIHVFAPDSMPWAQYGFLAVSCRFTGDEGFSGGRKAKLGRAWDQGARQTGYQPNKTANGQLVIRDSTIDASYDREQPWGVAATTARPFAGNVDSARNLDDVQFNRLWEYNNIDEV.

Positions 171 and 205 each coordinate substrate. Asp-228 serves as the catalytic Proton donor. Asp-261 (nucleophile) is an active-site residue. Arg-325 and Trp-327 together coordinate substrate.

Belongs to the pectinesterase family.

It carries out the reaction [(1-&gt;4)-alpha-D-galacturonosyl methyl ester](n) + n H2O = [(1-&gt;4)-alpha-D-galacturonosyl](n) + n methanol + n H(+). It functions in the pathway glycan metabolism; pectin degradation; 2-dehydro-3-deoxy-D-gluconate from pectin: step 1/5. This is Pectinesterase B (pemB) from Pectobacterium parmentieri.